A 204-amino-acid polypeptide reads, in one-letter code: MIFKNLISLFFIGLATAIRFNLTDLECSRLRGPHCGTYLLKVVGTNATYVGEKSFIGLDALTESKGEFFQRMLEQEPRLIPRLFTIAENDTANFTPLTFTTYLKTCNPQSIENAMIPFVNTVTSEISFDAWAYTAQNSSRITGLSNQLMNSTLYNVQVATCTPGFSALLLDSPTINVFNNEEGMPSWCQPIELIPVCPLDEGFN.

The first 17 residues, 1-17 (MIFKNLISLFFIGLATA), serve as a signal peptide directing secretion.

Belongs to the VEL1 family.

It localises to the cytoplasm. It is found in the cytosol. The chain is VEL1-related protein AC977.05c from Schizosaccharomyces pombe (strain 972 / ATCC 24843) (Fission yeast).